The chain runs to 329 residues: Malate dehydrogenase (329 aa).

NAD(+) is bound at residue 13 to 19 (GAAGNIS). Substrate-binding residues include arginine 94 and arginine 100. Residues asparagine 107, glutamine 114, and 131–133 (VGN) contribute to the NAD(+) site. The substrate site is built by asparagine 133 and arginine 164. Residue histidine 189 is the Proton acceptor of the active site.

The protein belongs to the LDH/MDH superfamily. MDH type 2 family.

It carries out the reaction (S)-malate + NAD(+) = oxaloacetate + NADH + H(+). Its function is as follows. Catalyzes the reversible oxidation of malate to oxaloacetate. This is Malate dehydrogenase from Psychrobacter arcticus (strain DSM 17307 / VKM B-2377 / 273-4).